A 404-amino-acid chain; its full sequence is Tryptophan synthase beta chain (404 aa).

N6-(pyridoxal phosphate)lysine is present on Lys94.

It belongs to the TrpB family. As to quaternary structure, tetramer of two alpha and two beta chains. The cofactor is pyridoxal 5'-phosphate.

It carries out the reaction (1S,2R)-1-C-(indol-3-yl)glycerol 3-phosphate + L-serine = D-glyceraldehyde 3-phosphate + L-tryptophan + H2O. It participates in amino-acid biosynthesis; L-tryptophan biosynthesis; L-tryptophan from chorismate: step 5/5. Functionally, the beta subunit is responsible for the synthesis of L-tryptophan from indole and L-serine. This chain is Tryptophan synthase beta chain, found in Staphylococcus aureus (strain MRSA252).